The primary structure comprises 404 residues: L-cysteine:1D-myo-inositol 2-amino-2-deoxy-alpha-D-glucopyranoside ligase (404 aa).

The disordered stretch occupies residues 1 to 20; the sequence is MRTWPTPDVPPLPRTGAPAP. Position 45 (Cys-45) interacts with Zn(2+). Residues 45 to 48, Thr-60, and 83 to 85 each bind L-cysteinyl-5'-AMP; these read CGIT and NVT. Positions 47 to 57 match the 'HIGH' region motif; it reads ITPYDATHLGH. The 'ERGGDP' region motif lies at 185–190; that stretch reads ERGGDP. The segment at 185–216 is disordered; the sequence is ERGGDPDRPGKKHPLDPALWRGEQPGEPSWDG. Residues 186 to 199 show a composition bias toward basic and acidic residues; sequence RGGDPDRPGKKHPL. Trp-226 is a binding site for L-cysteinyl-5'-AMP. Cys-230 serves as a coordination point for Zn(2+). 248-250 lines the L-cysteinyl-5'-AMP pocket; sequence GAD. His-255 serves as a coordination point for Zn(2+). Position 280 (Leu-280) interacts with L-cysteinyl-5'-AMP. The 'KMSKS' region motif lies at 286 to 290; it reads KMSKS.

It belongs to the class-I aminoacyl-tRNA synthetase family. MshC subfamily. As to quaternary structure, monomer. The cofactor is Zn(2+).

It carries out the reaction 1D-myo-inositol 2-amino-2-deoxy-alpha-D-glucopyranoside + L-cysteine + ATP = 1D-myo-inositol 2-(L-cysteinylamino)-2-deoxy-alpha-D-glucopyranoside + AMP + diphosphate + H(+). Functionally, catalyzes the ATP-dependent condensation of GlcN-Ins and L-cysteine to form L-Cys-GlcN-Ins. The sequence is that of L-cysteine:1D-myo-inositol 2-amino-2-deoxy-alpha-D-glucopyranoside ligase from Xylanimonas cellulosilytica (strain DSM 15894 / JCM 12276 / CECT 5975 / KCTC 9989 / LMG 20990 / NBRC 107835 / XIL07).